Consider the following 153-residue polypeptide: Ribosome maturation factor RimP (153 aa).

Belongs to the RimP family.

The protein localises to the cytoplasm. Functionally, required for maturation of 30S ribosomal subunits. This chain is Ribosome maturation factor RimP, found in Clostridium botulinum (strain Alaska E43 / Type E3).